The sequence spans 171 residues: 3-hydroxydecanoyl-[acyl-carrier-protein] dehydratase (171 aa).

The active site involves His-70.

It belongs to the thioester dehydratase family. FabA subfamily. Homodimer.

The protein resides in the cytoplasm. It catalyses the reaction a (3R)-hydroxyacyl-[ACP] = a (2E)-enoyl-[ACP] + H2O. The catalysed reaction is (3R)-hydroxydecanoyl-[ACP] = (2E)-decenoyl-[ACP] + H2O. It carries out the reaction (2E)-decenoyl-[ACP] = (3Z)-decenoyl-[ACP]. The protein operates within lipid metabolism; fatty acid biosynthesis. In terms of biological role, necessary for the introduction of cis unsaturation into fatty acids. Catalyzes the dehydration of (3R)-3-hydroxydecanoyl-ACP to E-(2)-decenoyl-ACP and then its isomerization to Z-(3)-decenoyl-ACP. Can catalyze the dehydratase reaction for beta-hydroxyacyl-ACPs with saturated chain lengths up to 16:0, being most active on intermediate chain length. The chain is 3-hydroxydecanoyl-[acyl-carrier-protein] dehydratase from Shewanella halifaxensis (strain HAW-EB4).